A 205-amino-acid polypeptide reads, in one-letter code: Putative 3-methyladenine DNA glycosylase (205 aa).

Belongs to the DNA glycosylase MPG family.

The chain is Putative 3-methyladenine DNA glycosylase from Bacillus thuringiensis (strain Al Hakam).